Here is a 201-residue protein sequence, read N- to C-terminus: Akirin (201 aa).

A disordered region spans residues 1 to 133 (MACATLKRAL…PRRPDSPQNL (133 aa)). Positions 20–25 (PKRRRC) match the Nuclear localization signal motif. A phosphoserine mark is found at Ser-39 and Ser-41. Composition is skewed to polar residues over residues 44 to 57 (GPST…TPSN) and 65 to 75 (EPSPFSESSLA). Phosphoserine is present on Ser-67. Low complexity predominate over residues 112 to 122 (SESSGSEMGPE). Phosphoserine occurs at positions 123 and 129.

Belongs to the akirin family. Interacts with dmap1. Interacts with bap60 and rel; interaction is immune stimulation-dependent; activates selected rel target gene promoters. Interacts with bap55; interaction is immune stimulation-dependent. Interacts with twi. Polyubiquitinated via 'Lys-63'-linked ubiquitin by Hyd, promoting interaction with rel. As to expression, ubiquitous.

The protein localises to the nucleus. Its function is as follows. Molecular adapter that acts as a bridge between a variety of multiprotein complexes, and which is required for embryonic development and for normal innate immune response. Acts as a regulator of embryonic myogenesis by bridging Twist (twi) with the SWI/SNF-like Brahma complex, promoting expression of twi-regulated genes during myogenesis. Effector of immune deficiency pathway (Imd) by acting either downstream of, or at the level of, the NF-kappa-B factor Relish (Rel). Acts by bridging the NF-kappa-B factor Rel and the Brahma complex through bap60 interaction, leading to activation a subset of NF-kappa-B factor Relish (Rel) effector genes. Not part of the Toll pathway. Required for the formation of the heart by promoting expression ot tinman (tin). In Drosophila melanogaster (Fruit fly), this protein is Akirin.